A 277-amino-acid chain; its full sequence is Orotidine 5'-phosphate decarboxylase (277 aa).

Lys-95 (proton donor) is an active-site residue.

Belongs to the OMP decarboxylase family. Type 2 subfamily.

The enzyme catalyses orotidine 5'-phosphate + H(+) = UMP + CO2. Its pathway is pyrimidine metabolism; UMP biosynthesis via de novo pathway; UMP from orotate: step 2/2. The protein is Orotidine 5'-phosphate decarboxylase of Mycolicibacterium vanbaalenii (strain DSM 7251 / JCM 13017 / BCRC 16820 / KCTC 9966 / NRRL B-24157 / PYR-1) (Mycobacterium vanbaalenii).